The sequence spans 226 residues: ATP synthase F(0) complex subunit a (226 aa).

6 helical membrane-spanning segments follow: residues 11 to 31, 68 to 88, 97 to 117, 138 to 158, 164 to 184, and 194 to 214; these read APTILGQPATIPIIMFPTLLI, WSLMLMSLITFITMTNLLGLL, QLSMNLAMAIPLWAGTIITGL, IPMLVMIETISLLIQPMALAV, ITAGHLLMHLIGNTMLTLSTI, and VLLMLLTILEIAVALIQAYVF.

This sequence belongs to the ATPase A chain family. Component of the ATP synthase complex composed at least of ATP5F1A/subunit alpha, ATP5F1B/subunit beta, ATP5MC1/subunit c (homooctomer), MT-ATP6/subunit a, MT-ATP8/subunit 8, ATP5ME/subunit e, ATP5MF/subunit f, ATP5MG/subunit g, ATP5MK/subunit k, ATP5MJ/subunit j, ATP5F1C/subunit gamma, ATP5F1D/subunit delta, ATP5F1E/subunit epsilon, ATP5PF/subunit F6, ATP5PB/subunit b, ATP5PD/subunit d, ATP5PO/subunit OSCP. ATP synthase complex consists of a soluble F(1) head domain (subunits alpha(3) and beta(3)) - the catalytic core - and a membrane F(0) domain - the membrane proton channel (subunits c, a, 8, e, f, g, k and j). These two domains are linked by a central stalk (subunits gamma, delta, and epsilon) rotating inside the F1 region and a stationary peripheral stalk (subunits F6, b, d, and OSCP). Interacts with DNAJC30; interaction is direct.

The protein localises to the mitochondrion inner membrane. The enzyme catalyses H(+)(in) = H(+)(out). Subunit a, of the mitochondrial membrane ATP synthase complex (F(1)F(0) ATP synthase or Complex V) that produces ATP from ADP in the presence of a proton gradient across the membrane which is generated by electron transport complexes of the respiratory chain. ATP synthase complex consist of a soluble F(1) head domain - the catalytic core - and a membrane F(1) domain - the membrane proton channel. These two domains are linked by a central stalk rotating inside the F(1) region and a stationary peripheral stalk. During catalysis, ATP synthesis in the catalytic domain of F(1) is coupled via a rotary mechanism of the central stalk subunits to proton translocation. With the subunit c (ATP5MC1), forms the proton-conducting channel in the F(0) domain, that contains two crucial half-channels (inlet and outlet) that facilitate proton movement from the mitochondrial intermembrane space (IMS) into the matrix. Protons are taken up via the inlet half-channel and released through the outlet half-channel, following a Grotthuss mechanism. This chain is ATP synthase F(0) complex subunit a, found in Papio hamadryas (Hamadryas baboon).